Consider the following 155-residue polypeptide: MPHSNISRAPRQNLTERVLQAKTAKNLTWAGLAEGTGLSVVYVTAALLGQHPLPEAVAEVVAERLGLDRDAVAELQTIPLRGNVEDVSSDPTIYRFHEMVQVYGTTLKALVHEQFGDGIISAINFKLDIKKVEDPEGGERAVITLDGKFLPYKPF.

Catalysis depends on residues Arg-95, Glu-98, and Ser-121.

Belongs to the cyanase family.

The catalysed reaction is cyanate + hydrogencarbonate + 3 H(+) = NH4(+) + 2 CO2. Functionally, catalyzes the reaction of cyanate with bicarbonate to produce ammonia and carbon dioxide. The chain is Cyanate hydratase from Pseudomonas savastanoi pv. phaseolicola (strain 1448A / Race 6) (Pseudomonas syringae pv. phaseolicola (strain 1448A / Race 6)).